A 603-amino-acid polypeptide reads, in one-letter code: Polypeptide N-acetylgalactosaminyltransferase 10 (603 aa).

Topologically, residues 1-11 (MRRKEKRLLQA) are cytoplasmic. A helical; Signal-anchor for type II membrane protein transmembrane segment spans residues 12–31 (VALVLAALVLLPNVGLWALY). Over 32-603 (RERQPDGTPG…STVLEKFNRN (572 aa)) the chain is Lumenal. The segment at 38–59 (GTPGGSGAAVAPAAGQGSHSRQ) is disordered. Low complexity predominate over residues 45–55 (AAVAPAAGQGS). N-linked (GlcNAc...) asparagine glycans are attached at residues asparagine 124 and asparagine 146. Disulfide bonds link cysteine 135–cysteine 365, cysteine 356–cysteine 432, cysteine 471–cysteine 488, cysteine 523–cysteine 538, and cysteine 563–cysteine 578. The segment at 144–253 (LPNTSIIIPF…VNWLPPLLDR (110 aa)) is catalytic subdomain A. Histidine 154, glutamate 156, aspartate 185, and arginine 214 together coordinate substrate. Position 237 (aspartate 237) interacts with Mn(2+). A substrate-binding site is contributed by serine 238. Histidine 239 provides a ligand contact to Mn(2+). Positions 311-373 (PFESPVMAGG…PCSRVGHIYR (63 aa)) are catalytic subdomain B. Tryptophan 342 contacts substrate. A Mn(2+)-binding site is contributed by histidine 370. Substrate contacts are provided by arginine 373 and tyrosine 378. A flexible loop region spans residues 373 to 384 (RKYVPYKVPAGV). The Ricin B-type lectin domain occupies 458–590 (AAWGEIRNVG…SSLTQQWLFE (133 aa)). A glycan (N-linked (GlcNAc...) asparagine) is linked at asparagine 593.

Belongs to the glycosyltransferase 2 family. GalNAc-T subfamily. It depends on Mn(2+) as a cofactor. Widely expressed. Expressed at high level in small intestine, and at intermediate levels in stomach, pancreas, ovary, thyroid gland and spleen. Weakly expressed in other tissues.

It is found in the golgi apparatus membrane. The enzyme catalyses L-seryl-[protein] + UDP-N-acetyl-alpha-D-galactosamine = a 3-O-[N-acetyl-alpha-D-galactosaminyl]-L-seryl-[protein] + UDP + H(+). The catalysed reaction is L-threonyl-[protein] + UDP-N-acetyl-alpha-D-galactosamine = a 3-O-[N-acetyl-alpha-D-galactosaminyl]-L-threonyl-[protein] + UDP + H(+). Its pathway is protein modification; protein glycosylation. Its function is as follows. Catalyzes the initial reaction in O-linked oligosaccharide biosynthesis, the transfer of an N-acetyl-D-galactosamine residue to a serine or threonine residue on the protein receptor. Has activity toward Muc5Ac and EA2 peptide substrates. This Homo sapiens (Human) protein is Polypeptide N-acetylgalactosaminyltransferase 10 (GALNT10).